A 396-amino-acid chain; its full sequence is DNA replication and repair protein RecF (396 aa).

Residue 30–37 (GANGSGKT) coordinates ATP.

It belongs to the RecF family.

It is found in the cytoplasm. In terms of biological role, the RecF protein is involved in DNA metabolism; it is required for DNA replication and normal SOS inducibility. RecF binds preferentially to single-stranded, linear DNA. It also seems to bind ATP. The chain is DNA replication and repair protein RecF from Thermomicrobium roseum (strain ATCC 27502 / DSM 5159 / P-2).